The primary structure comprises 236 residues: Ubiquinone biosynthesis O-methyltransferase (236 aa).

4 residues coordinate S-adenosyl-L-methionine: arginine 39, glycine 59, aspartate 80, and methionine 124.

It belongs to the methyltransferase superfamily. UbiG/COQ3 family.

The enzyme catalyses a 3-demethylubiquinol + S-adenosyl-L-methionine = a ubiquinol + S-adenosyl-L-homocysteine + H(+). The catalysed reaction is a 3-(all-trans-polyprenyl)benzene-1,2-diol + S-adenosyl-L-methionine = a 2-methoxy-6-(all-trans-polyprenyl)phenol + S-adenosyl-L-homocysteine + H(+). The protein operates within cofactor biosynthesis; ubiquinone biosynthesis. Functionally, O-methyltransferase that catalyzes the 2 O-methylation steps in the ubiquinone biosynthetic pathway. This is Ubiquinone biosynthesis O-methyltransferase from Shewanella sp. (strain W3-18-1).